The primary structure comprises 355 residues: Small ribosomal subunit protein uS2 (355 aa).

It belongs to the universal ribosomal protein uS2 family.

This Methylobacterium radiotolerans (strain ATCC 27329 / DSM 1819 / JCM 2831 / NBRC 15690 / NCIMB 10815 / 0-1) protein is Small ribosomal subunit protein uS2.